The sequence spans 347 residues: Quinolinate synthase (347 aa).

Histidine 47 and serine 68 together coordinate iminosuccinate. Position 113 (cysteine 113) interacts with [4Fe-4S] cluster. Residues 139 to 141 (YAN) and serine 156 contribute to the iminosuccinate site. Cysteine 200 contributes to the [4Fe-4S] cluster binding site. Residues 226–228 (HPE) and threonine 243 contribute to the iminosuccinate site. [4Fe-4S] cluster is bound at residue cysteine 297.

Belongs to the quinolinate synthase family. Type 1 subfamily. The cofactor is [4Fe-4S] cluster.

It localises to the cytoplasm. It carries out the reaction iminosuccinate + dihydroxyacetone phosphate = quinolinate + phosphate + 2 H2O + H(+). It participates in cofactor biosynthesis; NAD(+) biosynthesis; quinolinate from iminoaspartate: step 1/1. In terms of biological role, catalyzes the condensation of iminoaspartate with dihydroxyacetone phosphate to form quinolinate. The polypeptide is Quinolinate synthase (Escherichia fergusonii (strain ATCC 35469 / DSM 13698 / CCUG 18766 / IAM 14443 / JCM 21226 / LMG 7866 / NBRC 102419 / NCTC 12128 / CDC 0568-73)).